The primary structure comprises 257 residues: Acetylglutamate kinase (257 aa).

Residues Gly-43–Gly-44, Arg-65, and Asn-157 contribute to the substrate site. Residues Asp-180–Leu-185 and Ile-208–Thr-210 contribute to the ATP site.

Belongs to the acetylglutamate kinase family. ArgB subfamily. In terms of assembly, homodimer.

The protein localises to the cytoplasm. It carries out the reaction N-acetyl-L-glutamate + ATP = N-acetyl-L-glutamyl 5-phosphate + ADP. It participates in amino-acid biosynthesis; L-arginine biosynthesis; N(2)-acetyl-L-ornithine from L-glutamate: step 2/4. Catalyzes the ATP-dependent phosphorylation of N-acetyl-L-glutamate. The protein is Acetylglutamate kinase of Enterobacter sp. (strain 638).